The following is a 135-amino-acid chain: Small ribosomal subunit protein uS11 (135 aa).

Positions 1–10 (MPPKTRSQTG) are enriched in polar residues. The disordered stretch occupies residues 1–28 (MPPKTRSQTGAKKVRRKEKKNVAHGHAH). Basic residues predominate over residues 12–28 (KKVRRKEKKNVAHGHAH).

It belongs to the universal ribosomal protein uS11 family. In terms of assembly, part of the 30S ribosomal subunit. Interacts with proteins S7 and S18. Binds to IF-3.

In terms of biological role, located on the platform of the 30S subunit, it bridges several disparate RNA helices of the 16S rRNA. Forms part of the Shine-Dalgarno cleft in the 70S ribosome. In Acidothermus cellulolyticus (strain ATCC 43068 / DSM 8971 / 11B), this protein is Small ribosomal subunit protein uS11.